We begin with the raw amino-acid sequence, 140 residues long: Glycine cleavage system H protein (140 aa).

The Lipoyl-binding domain occupies 22 to 104 (EVVIGITRFA…YGKGWMLRLK (83 aa)). Lysine 63 is subject to N6-lipoyllysine.

Belongs to the GcvH family. The glycine cleavage system is composed of four proteins: P, T, L and H. (R)-lipoate is required as a cofactor.

Its function is as follows. The glycine cleavage system catalyzes the degradation of glycine. The H protein shuttles the methylamine group of glycine from the P protein to the T protein. The chain is Glycine cleavage system H protein from Magnetococcus marinus (strain ATCC BAA-1437 / JCM 17883 / MC-1).